A 564-amino-acid chain; its full sequence is Dihydroxy-acid dehydratase (564 aa).

Residue Asp80 coordinates Mg(2+). Cys121 contacts [2Fe-2S] cluster. Asp122 and Lys123 together coordinate Mg(2+). At Lys123 the chain carries N6-carboxylysine. Position 194 (Cys194) interacts with [2Fe-2S] cluster. Position 447 (Glu447) interacts with Mg(2+). The active-site Proton acceptor is the Ser473.

Belongs to the IlvD/Edd family. In terms of assembly, homodimer. Requires [2Fe-2S] cluster as cofactor. Mg(2+) is required as a cofactor.

It carries out the reaction (2R)-2,3-dihydroxy-3-methylbutanoate = 3-methyl-2-oxobutanoate + H2O. The enzyme catalyses (2R,3R)-2,3-dihydroxy-3-methylpentanoate = (S)-3-methyl-2-oxopentanoate + H2O. Its pathway is amino-acid biosynthesis; L-isoleucine biosynthesis; L-isoleucine from 2-oxobutanoate: step 3/4. It functions in the pathway amino-acid biosynthesis; L-valine biosynthesis; L-valine from pyruvate: step 3/4. Its function is as follows. Functions in the biosynthesis of branched-chain amino acids. Catalyzes the dehydration of (2R,3R)-2,3-dihydroxy-3-methylpentanoate (2,3-dihydroxy-3-methylvalerate) into 2-oxo-3-methylpentanoate (2-oxo-3-methylvalerate) and of (2R)-2,3-dihydroxy-3-methylbutanoate (2,3-dihydroxyisovalerate) into 2-oxo-3-methylbutanoate (2-oxoisovalerate), the penultimate precursor to L-isoleucine and L-valine, respectively. The sequence is that of Dihydroxy-acid dehydratase from Listeria monocytogenes serotype 4a (strain HCC23).